The primary structure comprises 635 residues: Biosynthetic arginine decarboxylase (635 aa).

Lys100 is subject to N6-(pyridoxal phosphate)lysine. Residue 282-292 coordinates substrate; that stretch reads LDIGGGLGVDY.

This sequence belongs to the Orn/Lys/Arg decarboxylase class-II family. SpeA subfamily. The cofactor is Mg(2+). It depends on pyridoxal 5'-phosphate as a cofactor.

It catalyses the reaction L-arginine + H(+) = agmatine + CO2. It participates in amine and polyamine biosynthesis; agmatine biosynthesis; agmatine from L-arginine: step 1/1. In terms of biological role, catalyzes the biosynthesis of agmatine from arginine. The protein is Biosynthetic arginine decarboxylase of Geotalea uraniireducens (strain Rf4) (Geobacter uraniireducens).